A 907-amino-acid chain; its full sequence is HMG box transcription factor BBX (907 aa).

Residues 1 to 19 (MKGSNRNKDHSTEGEGDGK) show a composition bias toward basic and acidic residues. Disordered stretches follow at residues 1–24 (MKGS…PKRK), 37–80 (LDFS…EQRA), 152–185 (TTNK…PTPK), and 220–242 (TPEA…RQKS). Acidic residues-rich tracts occupy residues 39-52 (FSEE…EEDI) and 61-75 (DGLE…DDES). Residues 80-148 (ARRPMNAFLL…AFMKANPGYR (69 aa)) constitute a DNA-binding region (HMG box). Residues 152 to 164 (TTNKPVKSPTPTV) show a composition bias toward polar residues. Ser-242 is modified (phosphoserine). Lys-384 participates in a covalent cross-link: Glycyl lysine isopeptide (Lys-Gly) (interchain with G-Cter in SUMO2). Disordered stretches follow at residues 435-483 (IIED…DIES), 495-612 (DWGV…SERS), and 628-672 (TSLR…KKFK). The span at 447-457 (KIKKKKKKNKL) shows a compositional bias: basic residues. Residues Ser-476 and Ser-483 each carry the phosphoserine modification. Composition is skewed to basic and acidic residues over residues 496-506 (WGVDKLGETPR) and 534-550 (KKVS…ESRP). A Glycyl lysine isopeptide (Lys-Gly) (interchain with G-Cter in SUMO2) cross-link involves residue Lys-571. A compositionally biased stretch (basic and acidic residues) spans 591-612 (KPEDSDCHRKTETCGSRKSERS). Positions 656–668 (ESWTFNQSGTSGS) are enriched in polar residues. A Glycyl lysine isopeptide (Lys-Gly) (interchain with G-Cter in SUMO2) cross-link involves residue Lys-693. Position 701 is a phosphoserine (Ser-701). Disordered stretches follow at residues 708-736 (KCVS…SGDK), 769-854 (NALS…SSTP), and 877-907 (VHRG…CADQ). Over residues 723-732 (SSESTKTSKG) the composition is skewed to low complexity. Residues 772–783 (SIPNTPEPTTMQ) show a composition bias toward polar residues. A Phosphoserine modification is found at Ser-789. Residues 790–801 (QKRKARKTKITH) show a composition bias toward basic residues. Ser-811 is modified (phosphoserine).

Its subcellular location is the nucleus. In terms of biological role, transcription factor that is necessary for cell cycle progression from G1 to S phase. This Mus musculus (Mouse) protein is HMG box transcription factor BBX (Bbx).